Here is a 154-residue protein sequence, read N- to C-terminus: Large ribosomal subunit protein uL13 (154 aa).

Belongs to the universal ribosomal protein uL13 family. Part of the 50S ribosomal subunit.

This protein is one of the early assembly proteins of the 50S ribosomal subunit, although it is not seen to bind rRNA by itself. It is important during the early stages of 50S assembly. The protein is Large ribosomal subunit protein uL13 of Brucella anthropi (strain ATCC 49188 / DSM 6882 / CCUG 24695 / JCM 21032 / LMG 3331 / NBRC 15819 / NCTC 12168 / Alc 37) (Ochrobactrum anthropi).